The following is a 315-amino-acid chain: tRNA uridine(34) hydroxylase (315 aa).

The region spanning serine 122–serine 223 is the Rhodanese domain. Cysteine 183 functions as the Cysteine persulfide intermediate in the catalytic mechanism.

The protein belongs to the TrhO family.

It catalyses the reaction uridine(34) in tRNA + AH2 + O2 = 5-hydroxyuridine(34) in tRNA + A + H2O. Its function is as follows. Catalyzes oxygen-dependent 5-hydroxyuridine (ho5U) modification at position 34 in tRNAs. The sequence is that of tRNA uridine(34) hydroxylase from Caulobacter vibrioides (strain ATCC 19089 / CIP 103742 / CB 15) (Caulobacter crescentus).